The primary structure comprises 272 residues: EID1-like F-box protein 3 (272 aa).

The 53-residue stretch at 29 to 81 (SGKSGIENERVLVLVFESISWDIHTLCTIASLSRRFCAIARRILWRRLCVNRA) folds into the F-box domain.

The polypeptide is EID1-like F-box protein 3 (EDL3) (Arabidopsis thaliana (Mouse-ear cress)).